We begin with the raw amino-acid sequence, 313 residues long: Beta-ketoacyl-[acyl-carrier-protein] synthase III (313 aa).

Catalysis depends on residues C112 and H238. Residues 239–243 (QANIR) form an ACP-binding region. N268 is a catalytic residue.

The protein belongs to the thiolase-like superfamily. FabH family. In terms of assembly, homodimer.

Its subcellular location is the cytoplasm. It catalyses the reaction malonyl-[ACP] + acetyl-CoA + H(+) = 3-oxobutanoyl-[ACP] + CO2 + CoA. It participates in lipid metabolism; fatty acid biosynthesis. Its function is as follows. Catalyzes the condensation reaction of fatty acid synthesis by the addition to an acyl acceptor of two carbons from malonyl-ACP. Catalyzes the first condensation reaction which initiates fatty acid synthesis and may therefore play a role in governing the total rate of fatty acid production. Possesses both acetoacetyl-ACP synthase and acetyl transacylase activities. Its substrate specificity determines the biosynthesis of branched-chain and/or straight-chain of fatty acids. The protein is Beta-ketoacyl-[acyl-carrier-protein] synthase III of Staphylococcus epidermidis (strain ATCC 35984 / DSM 28319 / BCRC 17069 / CCUG 31568 / BM 3577 / RP62A).